We begin with the raw amino-acid sequence, 250 residues long: Ribosomal RNA small subunit methyltransferase J (250 aa).

Residues 101–102 (RD), 117–118 (ER), 153–154 (SS), and Asp-171 contribute to the S-adenosyl-L-methionine site.

It belongs to the methyltransferase superfamily. RsmJ family.

It is found in the cytoplasm. It carries out the reaction guanosine(1516) in 16S rRNA + S-adenosyl-L-methionine = N(2)-methylguanosine(1516) in 16S rRNA + S-adenosyl-L-homocysteine + H(+). In terms of biological role, specifically methylates the guanosine in position 1516 of 16S rRNA. The protein is Ribosomal RNA small subunit methyltransferase J of Shigella boydii serotype 18 (strain CDC 3083-94 / BS512).